The following is a 456-amino-acid chain: Bifunctional protein GlmU (456 aa).

The interval 1–229 (MSNSAMSVVI…LSEVEGVNNR (229 aa)) is pyrophosphorylase. UDP-N-acetyl-alpha-D-glucosamine contacts are provided by residues 11–14 (LAAG), Lys-25, Gln-76, 81–82 (GT), 103–105 (YGD), Gly-140, Glu-154, Asn-169, and Asn-227. Asp-105 contacts Mg(2+). Residue Asn-227 participates in Mg(2+) binding. The segment at 230 to 250 (LQLSRLERIYQAEQSEKLLLA) is linker. Residues 251–456 (GVMLLDPARF…QGWQRPVKKK (206 aa)) are N-acetyltransferase. UDP-N-acetyl-alpha-D-glucosamine is bound by residues Arg-333 and Lys-351. His-363 acts as the Proton acceptor in catalysis. 2 residues coordinate UDP-N-acetyl-alpha-D-glucosamine: Tyr-366 and Asn-377. Acetyl-CoA-binding positions include Ala-380, 386 to 387 (NY), Ser-405, Ala-423, and Arg-440.

This sequence in the N-terminal section; belongs to the N-acetylglucosamine-1-phosphate uridyltransferase family. It in the C-terminal section; belongs to the transferase hexapeptide repeat family. Homotrimer. It depends on Mg(2+) as a cofactor.

It is found in the cytoplasm. The enzyme catalyses alpha-D-glucosamine 1-phosphate + acetyl-CoA = N-acetyl-alpha-D-glucosamine 1-phosphate + CoA + H(+). The catalysed reaction is N-acetyl-alpha-D-glucosamine 1-phosphate + UTP + H(+) = UDP-N-acetyl-alpha-D-glucosamine + diphosphate. It functions in the pathway nucleotide-sugar biosynthesis; UDP-N-acetyl-alpha-D-glucosamine biosynthesis; N-acetyl-alpha-D-glucosamine 1-phosphate from alpha-D-glucosamine 6-phosphate (route II): step 2/2. It participates in nucleotide-sugar biosynthesis; UDP-N-acetyl-alpha-D-glucosamine biosynthesis; UDP-N-acetyl-alpha-D-glucosamine from N-acetyl-alpha-D-glucosamine 1-phosphate: step 1/1. The protein operates within bacterial outer membrane biogenesis; LPS lipid A biosynthesis. Its function is as follows. Catalyzes the last two sequential reactions in the de novo biosynthetic pathway for UDP-N-acetylglucosamine (UDP-GlcNAc). The C-terminal domain catalyzes the transfer of acetyl group from acetyl coenzyme A to glucosamine-1-phosphate (GlcN-1-P) to produce N-acetylglucosamine-1-phosphate (GlcNAc-1-P), which is converted into UDP-GlcNAc by the transfer of uridine 5-monophosphate (from uridine 5-triphosphate), a reaction catalyzed by the N-terminal domain. This Serratia proteamaculans (strain 568) protein is Bifunctional protein GlmU.